We begin with the raw amino-acid sequence, 190 residues long: uncharacterized protein (190 aa).

Disordered stretches follow at residues 1 to 21 (MALR…ATVG) and 155 to 190 (PEMG…TQAS). Over residues 181 to 190 (SPSSHPTQAS) the composition is skewed to low complexity.

This is an uncharacterized protein from Homo sapiens (Human).